The primary structure comprises 117 residues: Large ribosomal subunit protein bL20c (117 aa).

It belongs to the bacterial ribosomal protein bL20 family.

It is found in the plastid. The protein resides in the chloroplast. In terms of biological role, binds directly to 23S ribosomal RNA and is necessary for the in vitro assembly process of the 50S ribosomal subunit. It is not involved in the protein synthesizing functions of that subunit. This chain is Large ribosomal subunit protein bL20c, found in Draba nemorosa (Woodland whitlowgrass).